We begin with the raw amino-acid sequence, 568 residues long: Peptidoglycan D,D-transpeptidase FtsI (568 aa).

A helical transmembrane segment spans residues 19 to 39 (FVTLCSIVFLFLVILTLRIIF). Ser-302 functions as the Acyl-ester intermediate in the catalytic mechanism.

The protein belongs to the transpeptidase family. FtsI subfamily.

Its subcellular location is the cell inner membrane. The catalysed reaction is Preferential cleavage: (Ac)2-L-Lys-D-Ala-|-D-Ala. Also transpeptidation of peptidyl-alanyl moieties that are N-acyl substituents of D-alanine.. The protein operates within cell wall biogenesis; peptidoglycan biosynthesis. Functionally, catalyzes cross-linking of the peptidoglycan cell wall at the division septum. The polypeptide is Peptidoglycan D,D-transpeptidase FtsI (Buchnera aphidicola subsp. Schizaphis graminum (strain Sg)).